A 149-amino-acid chain; its full sequence is General odorant-binding protein 57c (149 aa).

A signal peptide spans 1–16 (MLKLWLICILTVSVVS). Intrachain disulfides connect Cys32/Cys70, Cys66/Cys117, and Cys106/Cys126.

It belongs to the PBP/GOBP family.

Its function is as follows. Present in the aqueous fluid surrounding olfactory sensory dendrites and are thought to aid in the capture and transport of hydrophobic odorants into and through this fluid. The chain is General odorant-binding protein 57c from Drosophila melanogaster (Fruit fly).